Reading from the N-terminus, the 119-residue chain is Large ribosomal subunit protein uL18 (119 aa).

It belongs to the universal ribosomal protein uL18 family. As to quaternary structure, part of the 50S ribosomal subunit; part of the 5S rRNA/L5/L18/L25 subcomplex. Contacts the 5S and 23S rRNAs.

Functionally, this is one of the proteins that bind and probably mediate the attachment of the 5S RNA into the large ribosomal subunit, where it forms part of the central protuberance. This chain is Large ribosomal subunit protein uL18, found in Lactobacillus johnsonii (strain CNCM I-12250 / La1 / NCC 533).